The chain runs to 373 residues: Histidine protein methyltransferase 1 homolog (373 aa).

Basic and acidic residues predominate over residues Ser30 to Thr42. 2 disordered regions span residues Ser30 to Gln52 and Lys64 to Lys94. Residues Ala70–Leu88 are compositionally biased toward polar residues. Phosphoserine occurs at positions 72 and 77. His154 bears the Tele-methylhistidine mark. Residues Ile168–Thr172, Gly195, and Gln216–Tyr218 contribute to the S-adenosyl-L-methionine site. The Nuclear localization signal signature appears at Pro247–Arg253. Residues Gly269 to Trp271 and Ser294 contribute to the S-adenosyl-L-methionine site.

This sequence belongs to the methyltransferase superfamily. METTL18 family. Interacts with GRWD1 and members of the heat shock protein 90 and 70 families; these proteins may possibly be methylation substrates for the enzyme. Post-translationally, monomethylated at His-154 through automethylation. Automethylation at His-154 positively regulates the methyltransferase activity toward RPL3. Probably methylated on other residues.

The protein localises to the cytoplasm. Its subcellular location is the cytosol. The protein resides in the nucleus. It localises to the nucleolus. It carries out the reaction L-histidyl-[protein] + S-adenosyl-L-methionine = N(tele)-methyl-L-histidyl-[protein] + S-adenosyl-L-homocysteine + H(+). Functionally, protein-L-histidine N-tele-methyltransferase that specifically monomethylates RPL3, thereby regulating translation elongation. Histidine methylation of RPL3 regulates translation elongation by slowing ribosome traversal on tyrosine codons: slower elongation provides enough time for proper folding of synthesized proteins and prevents cellular aggregation of tyrosine-rich proteins. The protein is Histidine protein methyltransferase 1 homolog (METTL18) of Bos taurus (Bovine).